Here is a 578-residue protein sequence, read N- to C-terminus: Arginine--tRNA ligase (578 aa).

A 'HIGH' region motif is present at residues 127–137 (PNLAKEMHVGH).

This sequence belongs to the class-I aminoacyl-tRNA synthetase family. As to quaternary structure, monomer.

The protein resides in the cytoplasm. The catalysed reaction is tRNA(Arg) + L-arginine + ATP = L-arginyl-tRNA(Arg) + AMP + diphosphate. The protein is Arginine--tRNA ligase of Pseudomonas entomophila (strain L48).